The following is a 512-amino-acid chain: Colistin resistance protein EmrB (512 aa).

The next 14 membrane-spanning stretches (helical) occupy residues 17–37 (WAIF…IQIV), 55–75 (VTWV…MSSI), 84–104 (VYYT…ALSW), 115–135 (IQGF…YLLF), 144–164 (LVMF…IGGW), 169–189 (FSWH…ATVI), 205–225 (SMDW…EYFL), 234–254 (LADT…MIFF), 280–300 (ITTF…PVFL), 314–334 (VMMV…WLIP), 341–361 (TVFV…HLSI), 376–396 (GIGL…TLPL), 412–432 (IGGA…TAMH), and 486–506 (FNDL…LTIF).

It belongs to the major facilitator superfamily. EmrB family.

The protein localises to the cell inner membrane. Probably part of an efflux pump system that contributes to adaptation to osmotic stress and resistance to colistin. The protein is Colistin resistance protein EmrB of Acinetobacter baumannii (strain ATCC 17978 / DSM 105126 / CIP 53.77 / LMG 1025 / NCDC KC755 / 5377).